Consider the following 398-residue polypeptide: Argininosuccinate synthase (398 aa).

Ala-8 to Ser-16 contributes to the ATP binding site. Position 87 (Tyr-87) interacts with L-citrulline. ATP is bound at residue Gly-117. 3 residues coordinate L-aspartate: Thr-119, Asn-123, and Asp-124. Asn-123 lines the L-citrulline pocket. 4 residues coordinate L-citrulline: Arg-127, Ser-175, Glu-260, and Tyr-272.

It belongs to the argininosuccinate synthase family. Type 1 subfamily. In terms of assembly, homotetramer.

It is found in the cytoplasm. It catalyses the reaction L-citrulline + L-aspartate + ATP = 2-(N(omega)-L-arginino)succinate + AMP + diphosphate + H(+). Its pathway is amino-acid biosynthesis; L-arginine biosynthesis; L-arginine from L-ornithine and carbamoyl phosphate: step 2/3. This chain is Argininosuccinate synthase, found in Mycobacterium ulcerans (strain Agy99).